A 119-amino-acid chain; its full sequence is Large ribosomal subunit protein uL24 (119 aa).

Belongs to the universal ribosomal protein uL24 family. As to quaternary structure, part of the 50S ribosomal subunit.

Its function is as follows. One of two assembly initiator proteins, it binds directly to the 5'-end of the 23S rRNA, where it nucleates assembly of the 50S subunit. Functionally, one of the proteins that surrounds the polypeptide exit tunnel on the outside of the subunit. This Arthrobacter sp. (strain FB24) protein is Large ribosomal subunit protein uL24.